Here is a 467-residue protein sequence, read N- to C-terminus: ATP-dependent protease ATPase subunit HslU (467 aa).

ATP contacts are provided by residues valine 22 and 64–69 (GVGKTE). Positions 149–192 (QTNNPLESLFGGAIPNFGQNNEDEEEPPTEEIKTKRSEIKRQLE) are disordered. Positions 178 to 192 (EEIKTKRSEIKRQLE) are enriched in basic and acidic residues. Aspartate 280, glutamate 345, and arginine 417 together coordinate ATP.

The protein belongs to the ClpX chaperone family. HslU subfamily. As to quaternary structure, a double ring-shaped homohexamer of HslV is capped on each side by a ring-shaped HslU homohexamer. The assembly of the HslU/HslV complex is dependent on binding of ATP.

It is found in the cytoplasm. Functionally, ATPase subunit of a proteasome-like degradation complex; this subunit has chaperone activity. The binding of ATP and its subsequent hydrolysis by HslU are essential for unfolding of protein substrates subsequently hydrolyzed by HslV. HslU recognizes the N-terminal part of its protein substrates and unfolds these before they are guided to HslV for hydrolysis. This chain is ATP-dependent protease ATPase subunit HslU, found in Staphylococcus aureus (strain bovine RF122 / ET3-1).